We begin with the raw amino-acid sequence, 368 residues long: tRNA(Met) cytidine acetate ligase (368 aa).

Residues 7-20, G96, N152, and R175 contribute to the ATP site; that span reads IAEFNPFHNGHKYL.

It belongs to the TmcAL family.

It is found in the cytoplasm. It catalyses the reaction cytidine(34) in elongator tRNA(Met) + acetate + ATP = N(4)-acetylcytidine(34) in elongator tRNA(Met) + AMP + diphosphate. In terms of biological role, catalyzes the formation of N(4)-acetylcytidine (ac(4)C) at the wobble position of elongator tRNA(Met), using acetate and ATP as substrates. First activates an acetate ion to form acetyladenylate (Ac-AMP) and then transfers the acetyl group to tRNA to form ac(4)C34. The polypeptide is tRNA(Met) cytidine acetate ligase (Streptococcus pyogenes serotype M4 (strain MGAS10750)).